The primary structure comprises 63 residues: Protease 2 small chain (63 aa).

The region spanning Q11–I63 is the Peptidase S8 domain.

The protein belongs to the peptidase S8 family. In terms of assembly, heterodimer of a large and a small chain.

The protein resides in the secreted. The chain is Protease 2 small chain from Achromobacter lyticus.